The following is a 61-amino-acid chain: UPF0391 membrane protein Ajs_0703 (61 aa).

Helical transmembrane passes span 5–25 and 33–53; these read AIIF…GVAA and VLFV…LLGI.

This sequence belongs to the UPF0391 family.

It localises to the cell membrane. This chain is UPF0391 membrane protein Ajs_0703, found in Acidovorax sp. (strain JS42).